Reading from the N-terminus, the 200-residue chain is 7-methyl-GTP pyrophosphatase (200 aa).

Catalysis depends on Asp-75, which acts as the Proton acceptor.

Belongs to the Maf family. YceF subfamily. A divalent metal cation is required as a cofactor.

The protein localises to the cytoplasm. The enzyme catalyses N(7)-methyl-GTP + H2O = N(7)-methyl-GMP + diphosphate + H(+). Functionally, nucleoside triphosphate pyrophosphatase that hydrolyzes 7-methyl-GTP (m(7)GTP). May have a dual role in cell division arrest and in preventing the incorporation of modified nucleotides into cellular nucleic acids. The sequence is that of 7-methyl-GTP pyrophosphatase from Hydrogenovibrio crunogenus (strain DSM 25203 / XCL-2) (Thiomicrospira crunogena).